A 333-amino-acid chain; its full sequence is Phenylalanine--tRNA ligase alpha subunit (333 aa).

Position 254 (E254) interacts with Mg(2+).

Belongs to the class-II aminoacyl-tRNA synthetase family. Phe-tRNA synthetase alpha subunit type 1 subfamily. As to quaternary structure, tetramer of two alpha and two beta subunits. Mg(2+) is required as a cofactor.

It localises to the cytoplasm. It carries out the reaction tRNA(Phe) + L-phenylalanine + ATP = L-phenylalanyl-tRNA(Phe) + AMP + diphosphate + H(+). This is Phenylalanine--tRNA ligase alpha subunit from Xylella fastidiosa (strain M23).